The following is a 488-amino-acid chain: Bifunctional protein GlmU (488 aa).

Residues 1–237 (MPRTRTPLAA…AEEASGVNDR (237 aa)) are pyrophosphorylase. UDP-N-acetyl-alpha-D-glucosamine-binding positions include 13–16 (LAAG), K27, Q82, 87–88 (GT), 110–112 (SGD), G149, E164, N179, and N235. D112 provides a ligand contact to Mg(2+). Mg(2+) is bound at residue N235. The interval 238-258 (VELSRANRVMVGRLAEAFMRA) is linker. Residues 259-488 (GVTIEDPARF…KGRPAARRAS (230 aa)) are N-acetyltransferase. Residues R341 and K359 each contribute to the UDP-N-acetyl-alpha-D-glucosamine site. H371 serves as the catalytic Proton acceptor. Positions 374 and 385 each coordinate UDP-N-acetyl-alpha-D-glucosamine. Acetyl-CoA-binding positions include A388, 394 to 395 (NY), S413, A431, and R448. Positions 459 to 488 (AQRQAEKQMKGTATGPASARKGRPAARRAS) are disordered. The segment covering 478–488 (RKGRPAARRAS) has biased composition (basic residues).

This sequence in the N-terminal section; belongs to the N-acetylglucosamine-1-phosphate uridyltransferase family. The protein in the C-terminal section; belongs to the transferase hexapeptide repeat family. In terms of assembly, homotrimer. It depends on Mg(2+) as a cofactor.

Its subcellular location is the cytoplasm. The enzyme catalyses alpha-D-glucosamine 1-phosphate + acetyl-CoA = N-acetyl-alpha-D-glucosamine 1-phosphate + CoA + H(+). It carries out the reaction N-acetyl-alpha-D-glucosamine 1-phosphate + UTP + H(+) = UDP-N-acetyl-alpha-D-glucosamine + diphosphate. Its pathway is nucleotide-sugar biosynthesis; UDP-N-acetyl-alpha-D-glucosamine biosynthesis; N-acetyl-alpha-D-glucosamine 1-phosphate from alpha-D-glucosamine 6-phosphate (route II): step 2/2. It participates in nucleotide-sugar biosynthesis; UDP-N-acetyl-alpha-D-glucosamine biosynthesis; UDP-N-acetyl-alpha-D-glucosamine from N-acetyl-alpha-D-glucosamine 1-phosphate: step 1/1. The protein operates within bacterial outer membrane biogenesis; LPS lipid A biosynthesis. Catalyzes the last two sequential reactions in the de novo biosynthetic pathway for UDP-N-acetylglucosamine (UDP-GlcNAc). The C-terminal domain catalyzes the transfer of acetyl group from acetyl coenzyme A to glucosamine-1-phosphate (GlcN-1-P) to produce N-acetylglucosamine-1-phosphate (GlcNAc-1-P), which is converted into UDP-GlcNAc by the transfer of uridine 5-monophosphate (from uridine 5-triphosphate), a reaction catalyzed by the N-terminal domain. The sequence is that of Bifunctional protein GlmU from Anaeromyxobacter dehalogenans (strain 2CP-1 / ATCC BAA-258).